Reading from the N-terminus, the 542-residue chain is Chaperonin GroEL (542 aa).

ATP-binding positions include 29-32, 86-90, Gly413, 476-478, and Asp492; these read TLGP, DGTTT, and NAA. The interval 522-542 is disordered; the sequence is PDENGPAAVPDMGMGGMGGMM.

This sequence belongs to the chaperonin (HSP60) family. As to quaternary structure, forms a cylinder of 14 subunits composed of two heptameric rings stacked back-to-back. Interacts with the co-chaperonin GroES.

It is found in the cytoplasm. The catalysed reaction is ATP + H2O + a folded polypeptide = ADP + phosphate + an unfolded polypeptide.. Functionally, together with its co-chaperonin GroES, plays an essential role in assisting protein folding. The GroEL-GroES system forms a nano-cage that allows encapsulation of the non-native substrate proteins and provides a physical environment optimized to promote and accelerate protein folding. The sequence is that of Chaperonin GroEL from Listeria monocytogenes serotype 4b (strain CLIP80459).